Reading from the N-terminus, the 125-residue chain is Translation initiation factor 5A (125 aa).

Lys-35 is subject to Hypusine.

It belongs to the eIF-5A family.

The protein resides in the cytoplasm. In terms of biological role, functions by promoting the formation of the first peptide bond. This chain is Translation initiation factor 5A (eIF5A), found in Methanosphaerula palustris (strain ATCC BAA-1556 / DSM 19958 / E1-9c).